Reading from the N-terminus, the 338-residue chain is MKVLGIESSCDDCCAAIVENGNTILSNIKLSQKEHKKYYGIVPEIASRLHTEFIMYVCQQAIISAQINISEIDLIAVTSQPGLIGSLIVGVNFAKGLSIALKKPLICIDHILGHLYAPLLNHTIEYPFLSLVLSGGHTILAKQNNFDDIEILGRTLDDACGEAFDKIAKHYKMGFPGGPNIEKLAIDGNQYAFNFPITIFDKKENRYDFSYSGLKTACIHQLEKFKNNNAQITNNNIAASFQRAAFENLIIPIKRAIKDTNIKKLIISGGVASNLYLREKIKNLEIETYYPPIDLCTDNAAMIAGIGYLMYLKYGASSIETNANSRIENYKYTKGVKL.

Fe cation contacts are provided by histidine 110 and histidine 114. Substrate-binding positions include 132–136 (VLSGG), aspartate 165, glycine 178, and asparagine 274. Residue aspartate 298 coordinates Fe cation.

It belongs to the KAE1 / TsaD family. Fe(2+) is required as a cofactor.

The protein resides in the cytoplasm. It catalyses the reaction L-threonylcarbamoyladenylate + adenosine(37) in tRNA = N(6)-L-threonylcarbamoyladenosine(37) in tRNA + AMP + H(+). Required for the formation of a threonylcarbamoyl group on adenosine at position 37 (t(6)A37) in tRNAs that read codons beginning with adenine. Is involved in the transfer of the threonylcarbamoyl moiety of threonylcarbamoyl-AMP (TC-AMP) to the N6 group of A37, together with TsaE and TsaB. TsaD likely plays a direct catalytic role in this reaction. This Borrelia duttonii (strain Ly) protein is tRNA N6-adenosine threonylcarbamoyltransferase.